A 365-amino-acid polypeptide reads, in one-letter code: Alanine racemase (365 aa).

Lys35 acts as the Proton acceptor; specific for D-alanine in catalysis. The residue at position 35 (Lys35) is an N6-(pyridoxal phosphate)lysine. Arg130 contacts substrate. Tyr256 serves as the catalytic Proton acceptor; specific for L-alanine. Residue Met304 participates in substrate binding.

It belongs to the alanine racemase family. The cofactor is pyridoxal 5'-phosphate.

The enzyme catalyses L-alanine = D-alanine. It participates in amino-acid biosynthesis; D-alanine biosynthesis; D-alanine from L-alanine: step 1/1. In terms of biological role, catalyzes the interconversion of L-alanine and D-alanine. May also act on other amino acids. The chain is Alanine racemase (alr) from Polaromonas naphthalenivorans (strain CJ2).